We begin with the raw amino-acid sequence, 182 residues long: MQFNIPTLLTLFRVILIPFFVLVFYLPVTWSPFAAALIFCVAAVTDWFDGFLARRWNQSTRFGAFLDPVADKVLVAIAMVLVTEHYHSWWVTLPAATMIAREIIISALREWMAELGKRSSVAVSWIGKVKTTAQMVALAWLLWRPNIWVEYAGIALFFVAAVLTLWSMLQYLSAARADLLDQ.

Residues 2–12 (QFNIPTLLTLF) are Cytoplasmic-facing. The chain crosses the membrane as a helical span at residues 13 to 37 (RVILIPFFVLVFYLPVTWSPFAAAL). Residues 38 to 60 (IFCVAAVTDWFDGFLARRWNQST) are Periplasmic-facing. The chain crosses the membrane as a helical span at residues 61-81 (RFGAFLDPVADKVLVAIAMVL). Residues 82 to 86 (VTEHY) lie on the Cytoplasmic side of the membrane. A helical transmembrane segment spans residues 87-107 (HSWWVTLPAATMIAREIIISA). Topologically, residues 108–145 (LREWMAELGKRSSVAVSWIGKVKTTAQMVALAWLLWRP) are periplasmic. The chain crosses the membrane as a helical span at residues 146-168 (NIWVEYAGIALFFVAAVLTLWSM). Over 169–181 (LQYLSAARADLLD) the chain is Cytoplasmic.

It belongs to the CDP-alcohol phosphatidyltransferase class-I family.

Its subcellular location is the cell inner membrane. The enzyme catalyses a CDP-1,2-diacyl-sn-glycerol + sn-glycerol 3-phosphate = a 1,2-diacyl-sn-glycero-3-phospho-(1'-sn-glycero-3'-phosphate) + CMP + H(+). It participates in phospholipid metabolism; phosphatidylglycerol biosynthesis; phosphatidylglycerol from CDP-diacylglycerol: step 1/2. Functionally, catalyzes the conversion of cytidine diphosphate diacylglycerol (CDP-DG) and glycerol 3-phosphate into phosphatidylglycerol. Essential for the synthesis of anionic phospholipids, thereby playing a role in balancing the ratio of zwitterionic and anionic phospholipids, which is thought to be important for normal membrane function. In Shigella sonnei (strain Ss046), this protein is CDP-diacylglycerol--glycerol-3-phosphate 3-phosphatidyltransferase.